The sequence spans 889 residues: Chitin synthase I (889 aa).

A glycan (N-linked (GlcNAc...) asparagine) is linked at asparagine 43. A disordered region spans residues 94-138 (GEYFDGYNQGHPPQEHQAYDDDGQPLIEDQHGYSDNPQHQTQTPA). The segment covering 126–137 (YSDNPQHQTQTP) has biased composition (polar residues). An N-linked (GlcNAc...) asparagine glycan is attached at asparagine 199. Helical transmembrane passes span 431–451 (SAFGFISVLPGAFSAYRYVAL), 530–550 (RWLNGSFFAAIYAIAHFYEFF), 560–580 (LAFFVEFVFNTINMIFAWFAI), 606–626 (ILGVVFTWLYGVFLMTCFVLS), 641–661 (MVWFWAIIMIYLMFAAIFIAV), 687–707 (TLIISVMSTFGIWLIASIIMF), 716–736 (FIQYMLLTPTYTNVLNVYAFC), 815–835 (GVVLIWMITNFALAALVLSSA), and 861–881 (IVLWSVAVLSGFKFLGAMWFL).

It belongs to the chitin synthase family. Class I subfamily. Expressed in hyphal bodies.

It is found in the cell membrane. It carries out the reaction [(1-&gt;4)-N-acetyl-beta-D-glucosaminyl](n) + UDP-N-acetyl-alpha-D-glucosamine = [(1-&gt;4)-N-acetyl-beta-D-glucosaminyl](n+1) + UDP + H(+). In terms of biological role, polymerizes chitin, a structural polymer of the cell wall and septum, by transferring the sugar moiety of UDP-GlcNAc to the non-reducing end of the growing chitin polymer. Contributes to the production of conidia and the ability of fungal conidia to germinate. Not involved in fungal stress tolerances. In Metarhizium acridum (strain CQMa 102), this protein is Chitin synthase I.